Consider the following 108-residue polypeptide: Translation initiation factor 1A (108 aa).

Positions 11–85 (PSRDVPRPEE…NRCDILYKYG (75 aa)) constitute an S1-like domain.

Belongs to the eIF-1A family.

In terms of biological role, seems to be required for maximal rate of protein biosynthesis. Enhances ribosome dissociation into subunits and stabilizes the binding of the initiator Met-tRNA(I) to 40 S ribosomal subunits. The protein is Translation initiation factor 1A (eIF1A) of Saccharolobus solfataricus (strain ATCC 35092 / DSM 1617 / JCM 11322 / P2) (Sulfolobus solfataricus).